Here is a 654-residue protein sequence, read N- to C-terminus: Beta-galactosidase-1-like protein (654 aa).

An N-terminal signal peptide occupies residues 1–27 (MAPKKPSCLRSLLLPLSLTLLLPQADT). N-linked (GlcNAc...) asparagine glycosylation is present at N97. The active-site Proton donor is the E186. N243 is a glycosylation site (N-linked (GlcNAc...) asparagine). The active-site Nucleophile is E264.

The protein belongs to the glycosyl hydrolase 35 family.

It localises to the secreted. In terms of biological role, probable glycosyl hydrolase. In Macaca fascicularis (Crab-eating macaque), this protein is Beta-galactosidase-1-like protein (GLB1L).